Consider the following 526-residue polypeptide: Peptide chain release factor 3 (526 aa).

The 270-residue stretch at 8 to 277 folds into the tr-type G domain; the sequence is NKRRTFAIIS…GLTQWAPAPQ (270 aa). GTP contacts are provided by residues 17 to 24, 85 to 89, and 139 to 142; these read SHPDAGKT, DTPGH, and NKLD.

It belongs to the TRAFAC class translation factor GTPase superfamily. Classic translation factor GTPase family. PrfC subfamily.

It is found in the cytoplasm. In terms of biological role, increases the formation of ribosomal termination complexes and stimulates activities of RF-1 and RF-2. It binds guanine nucleotides and has strong preference for UGA stop codons. It may interact directly with the ribosome. The stimulation of RF-1 and RF-2 is significantly reduced by GTP and GDP, but not by GMP. The chain is Peptide chain release factor 3 from Histophilus somni (strain 2336) (Haemophilus somnus).